The chain runs to 422 residues: Probable biofilm formation methyltransferase WspC (422 aa).

Positions 1–264 (MNDRFERLLK…LSFVFRRTSE (264 aa)) constitute a CheR-type methyltransferase domain. S-adenosyl-L-methionine-binding positions include Thr-67, Arg-71, Glu-108, Asp-132, 186-187 (NL), and 205-206 (RN). Residues 289–316 (ASIRPSPPPPAKPRQRLSSLVPPASGQP) are disordered. A TPR repeat occupies 354–387 (ATVFYWLGLLSDVAGQEQEAQDFYRKALYLEPQH).

In terms of assembly, monomer.

In terms of biological role, involved in biofilm formation. In Pseudomonas aeruginosa (strain ATCC 15692 / DSM 22644 / CIP 104116 / JCM 14847 / LMG 12228 / 1C / PRS 101 / PAO1), this protein is Probable biofilm formation methyltransferase WspC (wspC).